A 150-amino-acid chain; its full sequence is MTTRTLRFYALVGFLVFLDQVTKYLAHAYLARDFIVIPNLFRLTLAKNSGAAFSFGTGFSWLFFLLGIIALIFIGWFLPRTTGSIVFLALLQGGIAGNVFDRLFKPPYFGNGEVVDFLNTPLLSGVVFNIADLFILAGVFGTFLFLKGSK.

The next 3 membrane-spanning stretches (helical) occupy residues 8–28, 58–78, and 81–101; these read FYALVGFLVFLDQVTKYLAHA, GFSWLFFLLGIIALIFIGWFL, and TTGSIVFLALLQGGIAGNVFD. Residues D116 and D132 contribute to the active site. The chain crosses the membrane as a helical span at residues 126-146; that stretch reads VVFNIADLFILAGVFGTFLFL.

This sequence belongs to the peptidase A8 family.

It localises to the cell membrane. The enzyme catalyses Release of signal peptides from bacterial membrane prolipoproteins. Hydrolyzes -Xaa-Yaa-Zaa-|-(S,diacylglyceryl)Cys-, in which Xaa is hydrophobic (preferably Leu), and Yaa (Ala or Ser) and Zaa (Gly or Ala) have small, neutral side chains.. Its pathway is protein modification; lipoprotein biosynthesis (signal peptide cleavage). In terms of biological role, this protein specifically catalyzes the removal of signal peptides from prolipoproteins. The polypeptide is Lipoprotein signal peptidase (Tropheryma whipplei (strain Twist) (Whipple's bacillus)).